The following is a 730-amino-acid chain: ATP-binding cassette sub-family D member 1 (730 aa).

Helical transmembrane passes span 24 to 44, 137 to 157, 169 to 189, and 276 to 296; these read AFSY…VTIP, FCLI…GALV, ALVL…NSMI, and ANII…AHIL. An ABC transmembrane type-1 domain is found at 136–373; sequence TFCLISRTFL…WFIMLEQFFM (238 aa). One can recognise an ABC transporter domain in the interval 505–727; it reads ISLRAVPVVT…MNSDEEQKGQ (223 aa). 538–545 contacts ATP; the sequence is GPNGCGKS.

Belongs to the ABC transporter superfamily. ABCD family. Peroxisomal fatty acyl CoA transporter (TC 3.A.1.203) subfamily.

It is found in the peroxisome membrane. The enzyme catalyses an acyl-CoA(out) + ATP + H2O = an acyl-CoA(in) + ADP + phosphate + H(+). Plays a role in the transport of free very-long-chain fatty acids (VLCFAs) as well as their CoA-esters across the peroxisomal membrane by acting as an ATP-specific binding subunit releasing ADP after ATP hydrolysis. Thus, plays a role in regulation of VLCFAs and energy metabolism namely, in the degradation and biosynthesis of fatty acids by beta-oxidation, mitochondrial function and microsomal fatty acid elongation. The polypeptide is ATP-binding cassette sub-family D member 1 (Drosophila melanogaster (Fruit fly)).